The sequence spans 207 residues: Ribosomal RNA large subunit methyltransferase E (207 aa).

A disordered region spans residues 1-20 (MKRDPTKGRKTPDHYARKAK). S-adenosyl-L-methionine contacts are provided by glycine 56, tryptophan 58, aspartate 76, aspartate 94, and aspartate 116. Lysine 156 acts as the Proton acceptor in catalysis.

Belongs to the class I-like SAM-binding methyltransferase superfamily. RNA methyltransferase RlmE family.

The protein resides in the cytoplasm. It carries out the reaction uridine(2552) in 23S rRNA + S-adenosyl-L-methionine = 2'-O-methyluridine(2552) in 23S rRNA + S-adenosyl-L-homocysteine + H(+). In terms of biological role, specifically methylates the uridine in position 2552 of 23S rRNA at the 2'-O position of the ribose in the fully assembled 50S ribosomal subunit. This Desulfosudis oleivorans (strain DSM 6200 / JCM 39069 / Hxd3) (Desulfococcus oleovorans) protein is Ribosomal RNA large subunit methyltransferase E.